Here is a 502-residue protein sequence, read N- to C-terminus: Protein MGF 505-5R (502 aa).

The protein belongs to the asfivirus MGF 505 family.

Plays a role in virus cell tropism, and may be required for efficient virus replication in macrophages. This African swine fever virus (isolate Tick/Malawi/Lil 20-1/1983) (ASFV) protein is Protein MGF 505-5R.